The primary structure comprises 505 residues: 2,3-bisphosphoglycerate-independent phosphoglycerate mutase (505 aa).

2 residues coordinate Mn(2+): Asp-12 and Ser-62. Catalysis depends on Ser-62, which acts as the Phosphoserine intermediate. Residues His-123, 153-154, Arg-185, Arg-191, 257-260, and Lys-330 each bind substrate; these read RD and RPDR. The Mn(2+) site is built by Asp-397, His-401, Asp-438, His-439, and His-456.

The protein belongs to the BPG-independent phosphoglycerate mutase family. As to quaternary structure, monomer. It depends on Mn(2+) as a cofactor.

The catalysed reaction is (2R)-2-phosphoglycerate = (2R)-3-phosphoglycerate. The protein operates within carbohydrate degradation; glycolysis; pyruvate from D-glyceraldehyde 3-phosphate: step 3/5. In terms of biological role, catalyzes the interconversion of 2-phosphoglycerate and 3-phosphoglycerate. The polypeptide is 2,3-bisphosphoglycerate-independent phosphoglycerate mutase (Staphylococcus aureus (strain MRSA252)).